Consider the following 380-residue polypeptide: Chaperone protein DnaJ (380 aa).

A J domain is found at 5-70 (DYYEVLGVER…SKRAAYDQYG (66 aa)). A CR-type zinc finger spans residues 139–217 (GTTVNIRVPT…CHGEGRVEES (79 aa)). Zn(2+) is bound by residues C152, C155, C169, C172, C191, C194, C205, and C208. CXXCXGXG motif repeat units follow at residues 152–159 (CKPCDGSG), 169–176 (CPTCGGIG), 191–198 (CPRCHGHG), and 205–212 (CDSCHGEG).

It belongs to the DnaJ family. In terms of assembly, homodimer. Zn(2+) is required as a cofactor.

The protein resides in the cytoplasm. Its function is as follows. Participates actively in the response to hyperosmotic and heat shock by preventing the aggregation of stress-denatured proteins and by disaggregating proteins, also in an autonomous, DnaK-independent fashion. Unfolded proteins bind initially to DnaJ; upon interaction with the DnaJ-bound protein, DnaK hydrolyzes its bound ATP, resulting in the formation of a stable complex. GrpE releases ADP from DnaK; ATP binding to DnaK triggers the release of the substrate protein, thus completing the reaction cycle. Several rounds of ATP-dependent interactions between DnaJ, DnaK and GrpE are required for fully efficient folding. Also involved, together with DnaK and GrpE, in the DNA replication of plasmids through activation of initiation proteins. This Pseudomonas syringae pv. tomato (strain ATCC BAA-871 / DC3000) protein is Chaperone protein DnaJ.